Here is a 461-residue protein sequence, read N- to C-terminus: ADP-specific phosphofructokinase (461 aa).

In terms of domain architecture, ADPK spans 1–457 (MVRELLEKAR…FTSYLAMLKE (457 aa)). The Mg(2+) site is built by E268, E298, and D441. The active-site Proton acceptor is the D441.

The protein belongs to the carbohydrate kinase PfkC family. The cofactor is Mg(2+).

Its subcellular location is the cytoplasm. The catalysed reaction is beta-D-fructose 6-phosphate + ADP = beta-D-fructose 1,6-bisphosphate + AMP + H(+). It functions in the pathway carbohydrate degradation; glycolysis. Its function is as follows. Catalyzes the phosphorylation of fructose 6-phosphate to fructose 1,6-bisphosphate using ADP as the phosphate donor. The chain is ADP-specific phosphofructokinase from Thermococcus kodakarensis (strain ATCC BAA-918 / JCM 12380 / KOD1) (Pyrococcus kodakaraensis (strain KOD1)).